The primary structure comprises 229 residues: Adenylate kinase 1 (229 aa).

42–47 is an ATP binding site; it reads GCGKGT. Phosphoserine is present on Ser-62. AMP-binding positions include Ser-63, Arg-68, 118–121, and Gln-125; that span reads GYPR. Arg-156 serves as a coordination point for ATP. Positions 164 and 175 each coordinate AMP.

The protein belongs to the adenylate kinase family. AK1 subfamily. High expression levels in the thorax, suggesting a possible function in the gastrointestinal or reproductive systems.

The protein resides in the cytoplasm. The catalysed reaction is AMP + ATP = 2 ADP. Its function is as follows. Catalyzes the reversible transfer of the terminal phosphate group between ATP and AMP. Plays an important role in cellular energy homeostasis and in adenine nucleotide metabolism. This chain is Adenylate kinase 1, found in Drosophila melanogaster (Fruit fly).